The sequence spans 356 residues: 3,4-dihydroxy-2-butanone 4-phosphate synthase (356 aa).

The tract at residues 1–211 is DHBP synthase; that stretch reads MNAILSDQKT…ISDIVEYRMM (211 aa). Residues 38–39, aspartate 43, 150–154, and glutamate 174 each bind D-ribulose 5-phosphate; these read RE and RIGHT. Glutamate 39 provides a ligand contact to Mg(2+). Residue histidine 153 participates in Mg(2+) binding. The GTP cyclohydrolase II-like stretch occupies residues 212 to 356; the sequence is NESLIRVIAE…KSTNVNETVA (145 aa).

It in the N-terminal section; belongs to the DHBP synthase family. In the C-terminal section; belongs to the GTP cyclohydrolase II family. Requires Mg(2+) as cofactor. Mn(2+) serves as cofactor.

It carries out the reaction D-ribulose 5-phosphate = (2S)-2-hydroxy-3-oxobutyl phosphate + formate + H(+). It functions in the pathway cofactor biosynthesis; riboflavin biosynthesis; 2-hydroxy-3-oxobutyl phosphate from D-ribulose 5-phosphate: step 1/1. Its function is as follows. Catalyzes the conversion of D-ribulose 5-phosphate to formate and 3,4-dihydroxy-2-butanone 4-phosphate. In Sulfurospirillum multivorans (Dehalospirillum multivorans), this protein is 3,4-dihydroxy-2-butanone 4-phosphate synthase (ribB).